The following is a 264-amino-acid chain: Phosphatidylserine decarboxylase proenzyme (264 aa).

Active-site charge relay system; for autoendoproteolytic cleavage activity residues include Asp86, His142, and Ser226. The active-site Schiff-base intermediate with substrate; via pyruvic acid; for decarboxylase activity is Ser226. The residue at position 226 (Ser226) is a Pyruvic acid (Ser); by autocatalysis.

It belongs to the phosphatidylserine decarboxylase family. PSD-B subfamily. Prokaryotic type I sub-subfamily. Heterodimer of a large membrane-associated beta subunit and a small pyruvoyl-containing alpha subunit. Pyruvate serves as cofactor. Post-translationally, is synthesized initially as an inactive proenzyme. Formation of the active enzyme involves a self-maturation process in which the active site pyruvoyl group is generated from an internal serine residue via an autocatalytic post-translational modification. Two non-identical subunits are generated from the proenzyme in this reaction, and the pyruvate is formed at the N-terminus of the alpha chain, which is derived from the carboxyl end of the proenzyme. The autoendoproteolytic cleavage occurs by a canonical serine protease mechanism, in which the side chain hydroxyl group of the serine supplies its oxygen atom to form the C-terminus of the beta chain, while the remainder of the serine residue undergoes an oxidative deamination to produce ammonia and the pyruvoyl prosthetic group on the alpha chain. During this reaction, the Ser that is part of the protease active site of the proenzyme becomes the pyruvoyl prosthetic group, which constitutes an essential element of the active site of the mature decarboxylase.

It localises to the cell membrane. It carries out the reaction a 1,2-diacyl-sn-glycero-3-phospho-L-serine + H(+) = a 1,2-diacyl-sn-glycero-3-phosphoethanolamine + CO2. It functions in the pathway phospholipid metabolism; phosphatidylethanolamine biosynthesis; phosphatidylethanolamine from CDP-diacylglycerol: step 2/2. Its function is as follows. Catalyzes the formation of phosphatidylethanolamine (PtdEtn) from phosphatidylserine (PtdSer). The protein is Phosphatidylserine decarboxylase proenzyme of Geobacillus kaustophilus (strain HTA426).